A 222-amino-acid chain; its full sequence is Charged multivesicular body protein 3 (222 aa).

Residue Gly-2 is the site of N-myristoyl glycine attachment. Residues 2–113 (GLFGKTQEKP…LQKSTEVMKA (112 aa)) form an intramolecular interaction with C-terminus region. A coiled-coil region spans residues 22–54 (KIRKEMRVVDRQIRDIQREEEKVKRSVKDAAKK). 2 important for autoinhibitory function regions span residues 59–64 (VCVVLA) and 168–169 (IL). The stretch at 141–222 (EEMLEDTFES…MQSRLATLRS (82 aa)) forms a coiled coil. An intramolecular interaction with N-terminus region spans residues 151–220 (MDDQEEMEEE…EAMQSRLATL (70 aa)). Positions 151–222 (MDDQEEMEEE…MQSRLATLRS (72 aa)) are interaction with VPS4A. A Glycyl lysine isopeptide (Lys-Gly) (interchain with G-Cter in ubiquitin) cross-link involves residue Lys-179. A disordered region spans residues 180-222 (APSKVTDALPEPEPSGAMAASEDEEEEEEALEAMQSRLATLRS). Interaction with STAMBP regions lie at residues 196–222 (AMAA…TLRS), 203–207 (EEEEE), and 221–222 (RS). At Ser-200 the chain carries Phosphoserine. Over residues 200–210 (SEDEEEEEEAL) the composition is skewed to acidic residues. The MIT-interacting motif signature appears at 201–211 (EDEEEEEEALE).

The protein belongs to the SNF7 family. In terms of assembly, probable core component of the endosomal sorting required for transport complex III (ESCRT-III). ESCRT-III components are thought to multimerize to form a flat lattice on the perimeter membrane of the endosome. Several assembly forms of ESCRT-III may exist that interact and act sequentially. Forms a metastable monomer in solution; its core structure (without part of the putative autoinhibitory C-terminal acidic region) oligomerizes into a flat lattice via two different dimerization interfaces. In vitro, heteromerizes with CHMP2A (but not CHMP4) to form helical tubular structures that expose membrane-interacting sites on the outside whereas VPS4B can associate on the inside of the tubule. May interact with IGFBP7; the relevance of such interaction however remains unclear. Interacts with CHMP2A. Interacts with CHMP4A; the interaction requires the release of CHMP4A autoinhibition. Interacts with VPS4A. Interacts with STAMBP; the interaction appears to relieve the autoinhibition of CHMP3. Interacts with VTA1.

The protein localises to the cytoplasm. Its subcellular location is the cytosol. The protein resides in the membrane. It is found in the endosome. It localises to the late endosome membrane. Probable core component of the endosomal sorting required for transport complex III (ESCRT-III) which is involved in multivesicular bodies (MVBs) formation and sorting of endosomal cargo proteins into MVBs. MVBs contain intraluminal vesicles (ILVs) that are generated by invagination and scission from the limiting membrane of the endosome and mostly are delivered to lysosomes enabling degradation of membrane proteins, such as stimulated growth factor receptors, lysosomal enzymes and lipids. The MVB pathway appears to require the sequential function of ESCRT-O, -I,-II and -III complexes. ESCRT-III proteins mostly dissociate from the invaginating membrane before the ILV is released. The ESCRT machinery also functions in topologically equivalent membrane fission events, such as the terminal stages of cytokinesis and the budding of enveloped viruses (lentiviruses). ESCRT-III proteins are believed to mediate the necessary vesicle extrusion and/or membrane fission activities, possibly in conjunction with the AAA ATPase VPS4. Selectively binds to phosphatidylinositol 3,5-bisphosphate PtdIns(3,5)P2 and PtdIns(3,4)P2 in preference to other phosphoinositides tested. Involved in late stages of cytokinesis. Plays a role in endosomal sorting/trafficking of EGF receptor. This Pongo abelii (Sumatran orangutan) protein is Charged multivesicular body protein 3 (CHMP3).